We begin with the raw amino-acid sequence, 1093 residues long: Carbamoyl phosphate synthase large chain (1093 aa).

The segment at 1 to 412 is carboxyphosphate synthetic domain; the sequence is MPRRNDIRKI…SLMKALRSLE (412 aa). The ATP site is built by Arg139, Arg179, Gly185, Gly186, Glu218, Val220, Glu225, Gly251, Val252, His253, Gln295, and Glu309. The ATP-grasp 1 domain occupies 143-338; that stretch reads KDAMTRIGLD…IAKIAAKLAV (196 aa). 3 residues coordinate Mg(2+): Gln295, Glu309, and Asn311. Mn(2+) is bound by residues Gln295, Glu309, and Asn311. The tract at residues 413–560 is oligomerization domain; that stretch reads TGKRVGAEVL…YSSYEEEDEA (148 aa). A carbamoyl phosphate synthetic domain region spans residues 561 to 952; that stretch reads PQTDKRKVII…AFAKAQLSAG (392 aa). An ATP-grasp 2 domain is found at 689–880; the sequence is GKLLEQLQIP…LAKIASRLMT (192 aa). ATP is bound by residues Arg725, His764, Leu766, Glu771, Gly796, Ile797, His798, Ser799, Gln839, and Glu851. Residues Gln839, Glu851, and Asn853 each coordinate Mg(2+). Gln839, Glu851, and Asn853 together coordinate Mn(2+). Residues 953–1093 enclose the MGS-like domain; that stretch reads LILPSSGTVF…QLLHAGHAVK (141 aa). The allosteric domain stretch occupies residues 953 to 1093; sequence LILPSSGTVF…QLLHAGHAVK (141 aa).

Belongs to the CarB family. As to quaternary structure, composed of two chains; the small (or glutamine) chain promotes the hydrolysis of glutamine to ammonia, which is used by the large (or ammonia) chain to synthesize carbamoyl phosphate. Tetramer of heterodimers (alpha,beta)4. Mg(2+) is required as a cofactor. Mn(2+) serves as cofactor.

It catalyses the reaction hydrogencarbonate + L-glutamine + 2 ATP + H2O = carbamoyl phosphate + L-glutamate + 2 ADP + phosphate + 2 H(+). The enzyme catalyses hydrogencarbonate + NH4(+) + 2 ATP = carbamoyl phosphate + 2 ADP + phosphate + 2 H(+). The protein operates within amino-acid biosynthesis; L-arginine biosynthesis; carbamoyl phosphate from bicarbonate: step 1/1. It participates in pyrimidine metabolism; UMP biosynthesis via de novo pathway; (S)-dihydroorotate from bicarbonate: step 1/3. Large subunit of the glutamine-dependent carbamoyl phosphate synthetase (CPSase). CPSase catalyzes the formation of carbamoyl phosphate from the ammonia moiety of glutamine, carbonate, and phosphate donated by ATP, constituting the first step of 2 biosynthetic pathways, one leading to arginine and/or urea and the other to pyrimidine nucleotides. The large subunit (synthetase) binds the substrates ammonia (free or transferred from glutamine from the small subunit), hydrogencarbonate and ATP and carries out an ATP-coupled ligase reaction, activating hydrogencarbonate by forming carboxy phosphate which reacts with ammonia to form carbamoyl phosphate. This is Carbamoyl phosphate synthase large chain from Acidobacterium capsulatum (strain ATCC 51196 / DSM 11244 / BCRC 80197 / JCM 7670 / NBRC 15755 / NCIMB 13165 / 161).